Here is a 357-residue protein sequence, read N- to C-terminus: Histidinol-phosphate aminotransferase (357 aa).

The residue at position 222 (Lys222) is an N6-(pyridoxal phosphate)lysine.

Belongs to the class-II pyridoxal-phosphate-dependent aminotransferase family. Histidinol-phosphate aminotransferase subfamily. In terms of assembly, homodimer. It depends on pyridoxal 5'-phosphate as a cofactor.

The catalysed reaction is L-histidinol phosphate + 2-oxoglutarate = 3-(imidazol-4-yl)-2-oxopropyl phosphate + L-glutamate. It functions in the pathway amino-acid biosynthesis; L-histidine biosynthesis; L-histidine from 5-phospho-alpha-D-ribose 1-diphosphate: step 7/9. This Leuconostoc mesenteroides subsp. mesenteroides (strain ATCC 8293 / DSM 20343 / BCRC 11652 / CCM 1803 / JCM 6124 / NCDO 523 / NBRC 100496 / NCIMB 8023 / NCTC 12954 / NRRL B-1118 / 37Y) protein is Histidinol-phosphate aminotransferase.